Reading from the N-terminus, the 152-residue chain is Transcriptional repressor NrdR (152 aa).

The segment at 3–34 (CPFCSTEETKVIDSRLVSEGYQVRRRRECTNC) is a zinc-finger region. An ATP-cone domain is found at 49-139 (PKIVKTDGYR…VYLSFENINE (91 aa)).

It belongs to the NrdR family. Requires Zn(2+) as cofactor.

Functionally, negatively regulates transcription of bacterial ribonucleotide reductase nrd genes and operons by binding to NrdR-boxes. The sequence is that of Transcriptional repressor NrdR from Actinobacillus succinogenes (strain ATCC 55618 / DSM 22257 / CCUG 43843 / 130Z).